A 269-amino-acid polypeptide reads, in one-letter code: Expansin-B1 (269 aa).

Residues 1–24 (MGSLANNIMVVGAVLAALVAGGSC) form the signal peptide. An N-linked (GlcNAc...) asparagine glycan is attached at N34. The 107-residue stretch at 63 to 169 (GGACGIKNVN…RRVRCKYPAG (107 aa)) folds into the Expansin-like EG45 domain. 3 cysteine pairs are disulfide-bonded: C66-C94, C97-C164, and C102-C108. The region spanning 183–264 (NYLAVLVKYV…NWRPDAVYTS (82 aa)) is the Expansin-like CBD domain.

Belongs to the expansin family. Expansin B subfamily. In terms of tissue distribution, expressed in anthers and pollen.

The protein resides in the secreted. It localises to the cell wall. The protein localises to the membrane. Its function is as follows. May aid fertilization by loosening the cell wall of the stigma and style, thereby facilitating penetration of the pollen tube. Acts selectively on grass cell walls, which are relatively poor in pectins and xyloglucans and rich in glucuronoarabinoxylans and (1-3),(1-4)-beta-D-glucans, when compared with cell walls of other angiosperms, including other monocots. The sequence is that of Expansin-B1 (EXPB1) from Zea mays (Maize).